A 354-amino-acid polypeptide reads, in one-letter code: Uroporphyrinogen decarboxylase (354 aa).

Residues 27–31 (RQAGR), aspartate 77, tyrosine 154, serine 209, and histidine 327 contribute to the substrate site.

The protein belongs to the uroporphyrinogen decarboxylase family. In terms of assembly, homodimer.

Its subcellular location is the cytoplasm. The enzyme catalyses uroporphyrinogen III + 4 H(+) = coproporphyrinogen III + 4 CO2. Its pathway is porphyrin-containing compound metabolism; protoporphyrin-IX biosynthesis; coproporphyrinogen-III from 5-aminolevulinate: step 4/4. Functionally, catalyzes the decarboxylation of four acetate groups of uroporphyrinogen-III to yield coproporphyrinogen-III. The polypeptide is Uroporphyrinogen decarboxylase (Teredinibacter turnerae (strain ATCC 39867 / T7901)).